The chain runs to 518 residues: Putative Rieske 2Fe-2S iron-sulfur protein MSMEG_6410/MSMEI_6242 (518 aa).

Lys-375 is covalently cross-linked (Isoglutamyl lysine isopeptide (Lys-Gln) (interchain with Q-Cter in protein Pup)). One can recognise a Rieske domain in the interval 431-518; sequence LYTFFKCLTD…KGHELRCQKL (88 aa). The [2Fe-2S] cluster site is built by Cys-471, His-473, Cys-491, and His-494.

[2Fe-2S] cluster serves as cofactor.

This chain is Putative Rieske 2Fe-2S iron-sulfur protein MSMEG_6410/MSMEI_6242, found in Mycolicibacterium smegmatis (strain ATCC 700084 / mc(2)155) (Mycobacterium smegmatis).